The primary structure comprises 121 residues: Large ribosomal subunit protein uL14 (121 aa).

Belongs to the universal ribosomal protein uL14 family. Part of the 50S ribosomal subunit. Forms a cluster with proteins L3 and L19. In the 70S ribosome, L14 and L19 interact and together make contacts with the 16S rRNA in bridges B5 and B8.

Its function is as follows. Binds to 23S rRNA. Forms part of two intersubunit bridges in the 70S ribosome. The polypeptide is Large ribosomal subunit protein uL14 (Prochlorococcus marinus (strain NATL1A)).